A 226-amino-acid polypeptide reads, in one-letter code: MVSVAFKQNLKKKYGIKFNNEKLLEDAFTHSSYANEHPGRKDYEKLEFLGDAVLELAVSDYLYRHFPRLNEGELTRMRSNIVRTEGFSEFAIECGFPEEINLGKGEEKAGARKRKTLLEDVFEAFNGALFLDQGMPAVQHFLHLTVYPLIAEGDFNASRDYKTELQERLQVNGPVKIEYQVISEDESKPSFKVQLLVNGEKVSEGQGRNKKAAEQQAAQAALDKNK.

The RNase III domain maps to 7–134 (KQNLKKKYGI…FNGALFLDQG (128 aa)). A Mg(2+)-binding site is contributed by Glu-47. Residue Asp-51 is part of the active site. 2 residues coordinate Mg(2+): Asp-120 and Glu-123. Residue Glu-123 is part of the active site. The region spanning 160 to 226 (DYKTELQERL…AAQAALDKNK (67 aa)) is the DRBM domain. The interval 201–226 (KVSEGQGRNKKAAEQQAAQAALDKNK) is disordered. The span at 214–226 (EQQAAQAALDKNK) shows a compositional bias: low complexity.

The protein belongs to the ribonuclease III family. In terms of assembly, homodimer. The cofactor is Mg(2+).

It localises to the cytoplasm. It carries out the reaction Endonucleolytic cleavage to 5'-phosphomonoester.. Functionally, digests double-stranded RNA. Involved in the processing of primary rRNA transcript to yield the immediate precursors to the large and small rRNAs (23S and 16S). Processes some mRNAs, and tRNAs when they are encoded in the rRNA operon. Processes pre-crRNA and tracrRNA of type II CRISPR loci if present in the organism. This chain is Ribonuclease 3, found in Lactobacillus johnsonii (strain CNCM I-12250 / La1 / NCC 533).